Reading from the N-terminus, the 245-residue chain is Chloride intracellular channel protein 2 (245 aa).

Residues methionine 1 to proline 96 are required for insertion into the membrane. A glutathione-binding site is contributed by glutamate 25. The short motif at cysteine 30 to cysteine 33 is the G-site element. The cysteines at positions 30 and 33 are disulfide-linked. The chain crosses the membrane as a helical span at residues phenylalanine 32–isoleucine 52. In terms of domain architecture, GST C-terminal spans asparagine 76–tyrosine 239. Residue histidine 227 participates in glutathione binding.

It belongs to the chloride channel CLIC family. As to quaternary structure, monomer. Interacts with TRAPPC2 and RYR2.

It localises to the cytoplasm. The protein localises to the membrane. The enzyme catalyses chloride(in) = chloride(out). It carries out the reaction tert-butyl hydroperoxide + 2 glutathione = tert-butanol + glutathione disulfide + H2O. It catalyses the reaction cumene hydroperoxide + 2 glutathione = 2-phenylpropan-2-ol + glutathione disulfide + H2O. In the soluble state, catalyzes glutaredoxin-like thiol disulfide exchange reactions with reduced glutathione as electron donor. Displays weak glutathione peroxidase activity. Can insert into membranes and form chloride ion channels. Membrane insertion seems to be redox-regulated and may occur only under oxidizing conditions. Modulates the activity of RYR2 and inhibits calcium influx. This chain is Chloride intracellular channel protein 2, found in Rattus norvegicus (Rat).